Reading from the N-terminus, the 204-residue chain is Proteasome subunit beta type-3 (204 aa).

This sequence belongs to the peptidase T1B family. The 26S proteasome consists of a 20S proteasome core and two 19S regulatory subunits. The 20S proteasome core is composed of 28 subunits that are arranged in four stacked rings, resulting in a barrel-shaped structure. The two end rings are each formed by seven alpha subunits, and the two central rings are each formed by seven beta subunits. The catalytic chamber with the active sites is on the inside of the barrel.

It is found in the cytoplasm. Its subcellular location is the nucleus. Functionally, non-catalytic component of the proteasome, a multicatalytic proteinase complex which is characterized by its ability to cleave peptides with Arg, Phe, Tyr, Leu, and Glu adjacent to the leaving group at neutral or slightly basic pH. The proteasome has an ATP-dependent proteolytic activity. In Picea mariana (Black spruce), this protein is Proteasome subunit beta type-3 (PBC1).